We begin with the raw amino-acid sequence, 533 residues long: Probable ADP-ribosylation factor-binding protein C25H2.16c (533 aa).

The 137-residue stretch at 15–151 (ATEPYAFEPD…LLSYKGYTFP (137 aa)) folds into the VHS domain. The GAT domain occupies 178 to 305 (REAMSAKLQE…LLTQYDHLLE (128 aa)). Residue Ser-320 is modified to Phosphoserine. The GAE domain occupies 417 to 532 (NNFTSTCAFE…EYTGQSSIRL (116 aa)).

The protein belongs to the GGA protein family.

It localises to the golgi apparatus. Its subcellular location is the trans-Golgi network. May play a role in the regulation of membrane traffic through the trans-Golgi network. The sequence is that of Probable ADP-ribosylation factor-binding protein C25H2.16c from Schizosaccharomyces pombe (strain 972 / ATCC 24843) (Fission yeast).